A 289-amino-acid polypeptide reads, in one-letter code: Leucine--tRNA ligase subunit beta (289 aa).

The short motif at 45-49 (KMSKS) is the 'KMSKS' region element. Lysine 48 is a binding site for ATP.

Belongs to the class-I aminoacyl-tRNA synthetase family. Seems to consist of an alpha chain and a beta chain.

The protein resides in the cytoplasm. The enzyme catalyses tRNA(Leu) + L-leucine + ATP = L-leucyl-tRNA(Leu) + AMP + diphosphate. This Aquifex aeolicus (strain VF5) protein is Leucine--tRNA ligase subunit beta (leuS').